The primary structure comprises 358 residues: DNA polymerase IV (358 aa).

The region spanning 4–185 (IIHIDMDCYF…LSLRKIPGVG (182 aa)) is the UmuC domain. Residues aspartate 8 and aspartate 103 each contribute to the Mg(2+) site. The active site involves glutamate 104.

The protein belongs to the DNA polymerase type-Y family. Monomer. It depends on Mg(2+) as a cofactor.

It is found in the cytoplasm. The enzyme catalyses DNA(n) + a 2'-deoxyribonucleoside 5'-triphosphate = DNA(n+1) + diphosphate. In terms of biological role, poorly processive, error-prone DNA polymerase involved in untargeted mutagenesis. Copies undamaged DNA at stalled replication forks, which arise in vivo from mismatched or misaligned primer ends. These misaligned primers can be extended by PolIV. Exhibits no 3'-5' exonuclease (proofreading) activity. May be involved in translesional synthesis, in conjunction with the beta clamp from PolIII. The polypeptide is DNA polymerase IV (Shewanella sp. (strain W3-18-1)).